A 157-amino-acid polypeptide reads, in one-letter code: Transcriptional regulator MraZ (157 aa).

2 consecutive SpoVT-AbrB domains span residues 7 to 52 (TYTM…AGGN) and 83 to 126 (SETL…EPER).

It belongs to the MraZ family. In terms of assembly, forms oligomers.

The protein resides in the cytoplasm. It localises to the nucleoid. This Xanthobacter autotrophicus (strain ATCC BAA-1158 / Py2) protein is Transcriptional regulator MraZ.